A 570-amino-acid chain; its full sequence is Proline--tRNA ligase (570 aa).

This sequence belongs to the class-II aminoacyl-tRNA synthetase family. ProS type 1 subfamily. In terms of assembly, homodimer.

The protein localises to the cytoplasm. The catalysed reaction is tRNA(Pro) + L-proline + ATP = L-prolyl-tRNA(Pro) + AMP + diphosphate. Its function is as follows. Catalyzes the attachment of proline to tRNA(Pro) in a two-step reaction: proline is first activated by ATP to form Pro-AMP and then transferred to the acceptor end of tRNA(Pro). As ProRS can inadvertently accommodate and process non-cognate amino acids such as alanine and cysteine, to avoid such errors it has two additional distinct editing activities against alanine. One activity is designated as 'pretransfer' editing and involves the tRNA(Pro)-independent hydrolysis of activated Ala-AMP. The other activity is designated 'posttransfer' editing and involves deacylation of mischarged Ala-tRNA(Pro). The misacylated Cys-tRNA(Pro) is not edited by ProRS. This is Proline--tRNA ligase from Shewanella sp. (strain ANA-3).